Consider the following 404-residue polypeptide: Cysteine desulfurase IscS (404 aa).

Pyridoxal 5'-phosphate is bound by residues 75–76 (AT), Asn155, Gln183, and 203–205 (SAH). N6-(pyridoxal phosphate)lysine is present on Lys206. Thr243 is a pyridoxal 5'-phosphate binding site. Cys328 functions as the Cysteine persulfide intermediate in the catalytic mechanism. [2Fe-2S] cluster is bound at residue Cys328.

Belongs to the class-V pyridoxal-phosphate-dependent aminotransferase family. NifS/IscS subfamily. As to quaternary structure, homodimer. Forms a heterotetramer with IscU, interacts with other sulfur acceptors. Pyridoxal 5'-phosphate serves as cofactor.

The protein localises to the cytoplasm. The catalysed reaction is (sulfur carrier)-H + L-cysteine = (sulfur carrier)-SH + L-alanine. Its pathway is cofactor biosynthesis; iron-sulfur cluster biosynthesis. In terms of biological role, master enzyme that delivers sulfur to a number of partners involved in Fe-S cluster assembly, tRNA modification or cofactor biosynthesis. Catalyzes the removal of elemental sulfur atoms from cysteine to produce alanine. Functions as a sulfur delivery protein for Fe-S cluster synthesis onto IscU, an Fe-S scaffold assembly protein, as well as other S acceptor proteins. This chain is Cysteine desulfurase IscS, found in Buchnera aphidicola subsp. Baizongia pistaciae (strain Bp).